Consider the following 270-residue polypeptide: uncharacterized protein (270 aa).

At 1–37 (MATHTSKRRIHRWENNELSEENSTIIYFPARGLMWTH) the chain is on the cytoplasmic side. A helical membrane pass occupies residues 38–58 (FPFVLGICLEFVGYVLKIVFI). The Extracellular portion of the chain corresponds to 59-65 (NSPSIST). A helical transmembrane segment spans residues 66 to 86 (FIAQSVLLLIAPSLYALSIFM). The Cytoplasmic segment spans residues 87–93 (LFSKMAR). The helical transmembrane segment at 94–114 (LILMEAYMLIPAKFSTVSFVV) threads the bilayer. At 115 to 140 (ADMIGRVLQAVGGGLLSSWNSRNTGR) the chain is on the extracellular side. Residues 141–161 (ILIIVGLFIQIFCYTFLTFSQ) traverse the membrane as a helical segment. The Cytoplasmic portion of the chain corresponds to 162–181 (LFLHYKMKATPSKIVRDSNE). Residues 182-202 (WFQYNFILLAGILLVNGRTIV) form a helical membrane-spanning segment. The Extracellular portion of the chain corresponds to 203-220 (RVVQFLMGLQSYIGQHEW). Residues 221 to 241 (CLYVFDTVLMFLLPLIFLATF) traverse the membrane as a helical segment. Topologically, residues 242–270 (RARNLFKLQDKSVNIQLNKLLDKESVSED) are cytoplasmic.

It belongs to the lipid-translocating exporter (LTE) (TC 9.A.26.1) family.

It localises to the membrane. This is an uncharacterized protein from Saccharomyces cerevisiae (strain ATCC 204508 / S288c) (Baker's yeast).